Reading from the N-terminus, the 186-residue chain is Translation initiation factor IF-3 (186 aa).

Belongs to the IF-3 family. As to quaternary structure, monomer.

Its subcellular location is the cytoplasm. IF-3 binds to the 30S ribosomal subunit and shifts the equilibrium between 70S ribosomes and their 50S and 30S subunits in favor of the free subunits, thus enhancing the availability of 30S subunits on which protein synthesis initiation begins. This Chlamydia muridarum (strain MoPn / Nigg) protein is Translation initiation factor IF-3.